The sequence spans 339 residues: Phenylalanine--tRNA ligase alpha subunit (339 aa).

Glu250 contacts Mg(2+).

It belongs to the class-II aminoacyl-tRNA synthetase family. Phe-tRNA synthetase alpha subunit type 1 subfamily. Tetramer of two alpha and two beta subunits. The cofactor is Mg(2+).

It localises to the cytoplasm. It carries out the reaction tRNA(Phe) + L-phenylalanine + ATP = L-phenylalanyl-tRNA(Phe) + AMP + diphosphate + H(+). In Bacteroides thetaiotaomicron (strain ATCC 29148 / DSM 2079 / JCM 5827 / CCUG 10774 / NCTC 10582 / VPI-5482 / E50), this protein is Phenylalanine--tRNA ligase alpha subunit.